Here is a 128-residue protein sequence, read N- to C-terminus: Ribonuclease pancreatic B (128 aa).

Positions 1 to 21 (AESSAMKFQRQHMDPEGSPSN) are disordered. Lys-7 and Arg-10 together coordinate substrate. His-12 serves as the catalytic Proton acceptor. N-linked (GlcNAc...) asparagine glycans are attached at residues Asn-21 and Asn-34. Disulfide bonds link Cys-26-Cys-84, Cys-40-Cys-95, Cys-58-Cys-110, and Cys-65-Cys-72. Residues 41–45 (KPVNT), Lys-66, and Arg-85 contribute to the substrate site. Catalysis depends on His-119, which acts as the Proton donor.

The protein belongs to the pancreatic ribonuclease family. Pancreas.

It localises to the secreted. The enzyme catalyses an [RNA] containing cytidine + H2O = an [RNA]-3'-cytidine-3'-phosphate + a 5'-hydroxy-ribonucleotide-3'-[RNA].. It catalyses the reaction an [RNA] containing uridine + H2O = an [RNA]-3'-uridine-3'-phosphate + a 5'-hydroxy-ribonucleotide-3'-[RNA].. In Cavia porcellus (Guinea pig), this protein is Ribonuclease pancreatic B.